Here is a 70-residue protein sequence, read N- to C-terminus: MPTVQTPSQRRANTQFQKNITRRVKTNSKERYVAKHPPTKIPRNIAMFFILLMSGGIILGILRFLLTFFS.

The segment covering 1–19 (MPTVQTPSQRRANTQFQKN) has biased composition (polar residues). Residues 1 to 20 (MPTVQTPSQRRANTQFQKNI) are disordered. A helical transmembrane segment spans residues 45 to 65 (IAMFFILLMSGGIILGILRFL).

Belongs to the RAMP4 family.

It is found in the membrane. The protein resides in the endoplasmic reticulum membrane. In terms of biological role, interacts with target proteins during their translocation into the lumen of the endoplasmic reticulum. Protects unfolded target proteins against degradation during ER stress. May facilitate glycosylation of target proteins after termination of ER stress. This is Protein tam14 (tam14) from Schizosaccharomyces pombe (strain 972 / ATCC 24843) (Fission yeast).